Reading from the N-terminus, the 50-residue chain is Sproutin (50 aa).

Ser-8 carries the phosphoserine; by PKC modification.

Brain.

Functionally, neurite outgrowth factor. This chain is Sproutin, found in Rattus norvegicus (Rat).